The chain runs to 154 residues: Ribosome maturation factor RimP (154 aa).

The protein belongs to the RimP family.

Its subcellular location is the cytoplasm. In terms of biological role, required for maturation of 30S ribosomal subunits. This chain is Ribosome maturation factor RimP, found in Yersinia pseudotuberculosis serotype O:1b (strain IP 31758).